Reading from the N-terminus, the 369-residue chain is Serine/threonine-protein phosphatase PP2A-1 catalytic subunit (369 aa).

Residues 1–57 (MDTDLDVPMQDAVTEQLTPTVSEDMDLNNNSSDNNAEEFSVDDLKPGSSGIADHKSS) form a disordered region. Positions 117, 119, 145, and 177 each coordinate Mn(2+). The Proton donor role is filled by His-178. His-227 and His-301 together coordinate Mn(2+). A disordered region spans residues 348–369 (QYDPSVRPGEPSVSRKTPDYFL). The residue at position 369 (Leu-369) is a Leucine methyl ester.

The protein belongs to the PPP phosphatase family. PP-2A subfamily. As to quaternary structure, inactivated in a complex with phosphatase methylesterase PPE1 (PP2Ai). Interacts with phosphatase 2A activator RRD2, which can reactivate PP2Ai by dissociating the catalytic subunit from the complex. Forms a ternary complex with RRD2-TAP42. It depends on Mn(2+) as a cofactor. In terms of processing, reversibly methyl esterified on Leu-369 by leucine carboxyl methyltransferase 1 (PPM1) and protein phosphatase methylesterase 1 (PPE1). Carboxyl methylation influences the affinity of the catalytic subunit for the different regulatory subunits, thereby modulating the PP2A holoenzyme's substrate specificity, enzyme activity and cellular localization.

The catalysed reaction is O-phospho-L-seryl-[protein] + H2O = L-seryl-[protein] + phosphate. It carries out the reaction O-phospho-L-threonyl-[protein] + H2O = L-threonyl-[protein] + phosphate. In terms of biological role, exact function not known, phosphatase 2A performs an essential cellular function. In Saccharomyces cerevisiae (strain ATCC 204508 / S288c) (Baker's yeast), this protein is Serine/threonine-protein phosphatase PP2A-1 catalytic subunit (PPH21).